A 479-amino-acid polypeptide reads, in one-letter code: Bifunctional protein HldE (479 aa).

The ribokinase stretch occupies residues 1–319 (MTVILPDFLK…NVVQKYEYTK (319 aa)). 195-198 (NMSE) is a binding site for ATP. Asp264 is an active-site residue. The tract at residues 346 to 479 (MTNGVFDILH…IDTMEINEIN (134 aa)) is cytidylyltransferase.

In the N-terminal section; belongs to the carbohydrate kinase PfkB family. It in the C-terminal section; belongs to the cytidylyltransferase family. As to quaternary structure, homodimer.

The catalysed reaction is D-glycero-beta-D-manno-heptose 7-phosphate + ATP = D-glycero-beta-D-manno-heptose 1,7-bisphosphate + ADP + H(+). It carries out the reaction D-glycero-beta-D-manno-heptose 1-phosphate + ATP + H(+) = ADP-D-glycero-beta-D-manno-heptose + diphosphate. It functions in the pathway nucleotide-sugar biosynthesis; ADP-L-glycero-beta-D-manno-heptose biosynthesis; ADP-L-glycero-beta-D-manno-heptose from D-glycero-beta-D-manno-heptose 7-phosphate: step 1/4. It participates in nucleotide-sugar biosynthesis; ADP-L-glycero-beta-D-manno-heptose biosynthesis; ADP-L-glycero-beta-D-manno-heptose from D-glycero-beta-D-manno-heptose 7-phosphate: step 3/4. Functionally, catalyzes the phosphorylation of D-glycero-D-manno-heptose 7-phosphate at the C-1 position to selectively form D-glycero-beta-D-manno-heptose-1,7-bisphosphate. Catalyzes the ADP transfer from ATP to D-glycero-beta-D-manno-heptose 1-phosphate, yielding ADP-D-glycero-beta-D-manno-heptose. The sequence is that of Bifunctional protein HldE from Blochmanniella floridana.